Here is a 417-residue protein sequence, read N- to C-terminus: MFIKNKTISNYDADVYRMMKQEYQRQENHIELIASENYVSSCVMEAQGSQLTNKYAEGYPGKRYYGGCDYVDAIEKIAIKRAKKLFNANYANVQPHSGSQANYAVYSALLKPNDIVLGMSLSHGGHLTHGSSVNFSGKLYKFISYGLDISGDIDYPQIRKLAHRYKPKMIVGGFSAYSGICNWKLLREIADEINSYLFVDMAHISGLVAAGLYPNPLKYAHVVTSTTHKTLSGPRGGLILAKGDNVSLFKKLNSSVFPGCQGGPLMHVIAAKAIAFKEAMEPEFKDYQYQVIKNAQEMAKTFISRGYKVVSGKTFNHLLLLDLSNKNITGKRADILLHSANIIVNKNSIPNDLLSPFITSGIRIGTPAITRRGFTELESRQVSNWICDILDNFNNIEISAKVKQKVLNLCSLFPVYK.

(6S)-5,6,7,8-tetrahydrofolate contacts are provided by residues leucine 121 and 125-127 (GHL). Lysine 229 is modified (N6-(pyridoxal phosphate)lysine). 355-357 (SPF) serves as a coordination point for (6S)-5,6,7,8-tetrahydrofolate.

Belongs to the SHMT family. In terms of assembly, homodimer. It depends on pyridoxal 5'-phosphate as a cofactor.

The protein localises to the cytoplasm. It catalyses the reaction (6R)-5,10-methylene-5,6,7,8-tetrahydrofolate + glycine + H2O = (6S)-5,6,7,8-tetrahydrofolate + L-serine. It functions in the pathway one-carbon metabolism; tetrahydrofolate interconversion. Its pathway is amino-acid biosynthesis; glycine biosynthesis; glycine from L-serine: step 1/1. Catalyzes the reversible interconversion of serine and glycine with tetrahydrofolate (THF) serving as the one-carbon carrier. This reaction serves as the major source of one-carbon groups required for the biosynthesis of purines, thymidylate, methionine, and other important biomolecules. Also exhibits THF-independent aldolase activity toward beta-hydroxyamino acids, producing glycine and aldehydes, via a retro-aldol mechanism. In Buchnera aphidicola subsp. Baizongia pistaciae (strain Bp), this protein is Serine hydroxymethyltransferase.